The sequence spans 416 residues: 4-hydroxy-3-methylbut-2-en-1-yl diphosphate synthase (flavodoxin) (416 aa).

[4Fe-4S] cluster contacts are provided by Cys-304, Cys-307, Cys-350, and Glu-357.

It belongs to the IspG family. [4Fe-4S] cluster is required as a cofactor.

It catalyses the reaction (2E)-4-hydroxy-3-methylbut-2-enyl diphosphate + oxidized [flavodoxin] + H2O + 2 H(+) = 2-C-methyl-D-erythritol 2,4-cyclic diphosphate + reduced [flavodoxin]. The protein operates within isoprenoid biosynthesis; isopentenyl diphosphate biosynthesis via DXP pathway; isopentenyl diphosphate from 1-deoxy-D-xylulose 5-phosphate: step 5/6. In terms of biological role, converts 2C-methyl-D-erythritol 2,4-cyclodiphosphate (ME-2,4cPP) into 1-hydroxy-2-methyl-2-(E)-butenyl 4-diphosphate. In Agrobacterium fabrum (strain C58 / ATCC 33970) (Agrobacterium tumefaciens (strain C58)), this protein is 4-hydroxy-3-methylbut-2-en-1-yl diphosphate synthase (flavodoxin).